The sequence spans 209 residues: Ribosomal RNA large subunit methyltransferase E (209 aa).

S-adenosyl-L-methionine is bound by residues glycine 63, tryptophan 65, aspartate 83, aspartate 99, and aspartate 124. The active-site Proton acceptor is lysine 164.

This sequence belongs to the class I-like SAM-binding methyltransferase superfamily. RNA methyltransferase RlmE family.

It localises to the cytoplasm. The catalysed reaction is uridine(2552) in 23S rRNA + S-adenosyl-L-methionine = 2'-O-methyluridine(2552) in 23S rRNA + S-adenosyl-L-homocysteine + H(+). Functionally, specifically methylates the uridine in position 2552 of 23S rRNA at the 2'-O position of the ribose in the fully assembled 50S ribosomal subunit. In Yersinia enterocolitica serotype O:8 / biotype 1B (strain NCTC 13174 / 8081), this protein is Ribosomal RNA large subunit methyltransferase E.